Consider the following 445-residue polypeptide: Transcription termination factor MTERF15, mitochondrial (445 aa).

Residues 1–25 constitute a mitochondrion transit peptide; the sequence is MASKLKTFINLRDYPITLFNQIRSL.

It belongs to the mTERF family.

The protein localises to the mitochondrion. In terms of biological role, transcription termination factor required for mitochondrial NAD2 intron 3 splicing and normal membrane respiratory chain Complex I activity. Essential for normal plant growth and development. Binds to RNA but not to double-stranded DNA. The protein is Transcription termination factor MTERF15, mitochondrial of Arabidopsis thaliana (Mouse-ear cress).